The primary structure comprises 145 residues: Large ribosomal subunit protein uL15 (145 aa).

The tract at residues 23–51 (IGSGWGKTGGRGHKGQKSRSGGKIRKSFE) is disordered. Basic residues predominate over residues 32–47 (GRGHKGQKSRSGGKIR).

It belongs to the universal ribosomal protein uL15 family. As to quaternary structure, part of the 50S ribosomal subunit.

Functionally, binds to the 23S rRNA. The sequence is that of Large ribosomal subunit protein uL15 from Buchnera aphidicola subsp. Cinara cedri (strain Cc).